We begin with the raw amino-acid sequence, 98 residues long: Small ribosomal subunit protein uS19 (98 aa).

It belongs to the universal ribosomal protein uS19 family.

In terms of biological role, protein S19 forms a complex with S13 that binds strongly to the 16S ribosomal RNA. The polypeptide is Small ribosomal subunit protein uS19 (Chlorobaculum parvum (strain DSM 263 / NCIMB 8327) (Chlorobium vibrioforme subsp. thiosulfatophilum)).